The primary structure comprises 428 residues: GTPase Obg (428 aa).

One can recognise an Obg domain in the interval 1–158; sequence MFVDQVKIYV…RDVILELKVL (158 aa). In terms of domain architecture, OBG-type G spans 159–329; that stretch reads ADVGLVGFPS…LLFEVANLIE (171 aa). GTP-binding positions include 165-172, 190-194, 212-215, 282-285, and 310-312; these read GFPSVGKS, FTTIV, DLPG, NKMD, and SAV. Mg(2+) contacts are provided by Ser-172 and Thr-192. The region spanning 350 to 428 is the OCT domain; sequence KFETEGVKFD…ILEYEFEFID (79 aa).

It belongs to the TRAFAC class OBG-HflX-like GTPase superfamily. OBG GTPase family. As to quaternary structure, monomer. Mg(2+) is required as a cofactor.

The protein resides in the cytoplasm. Its function is as follows. An essential GTPase which binds GTP, GDP and possibly (p)ppGpp with moderate affinity, with high nucleotide exchange rates and a fairly low GTP hydrolysis rate. Plays a role in control of the cell cycle, stress response, ribosome biogenesis and in those bacteria that undergo differentiation, in morphogenesis control. This Bacillus cereus (strain AH820) protein is GTPase Obg.